The following is a 151-amino-acid chain: MNPQRKKRLFLILGLLAGVAVAVGFALSALQQNINLFYTPTQIANGEAPLDTRIRAGGMVEKGSLQRSGDSLDVRFVVTDFNKSVPITYRGILPDLFREGQGIVALGKLNAEGVVVADEVLAKHDEKYMPPEVTKALKESGQAASGAEAKP.

Residues 1–8 (MNPQRKKR) lie on the Cytoplasmic side of the membrane. A helical; Signal-anchor for type II membrane protein membrane pass occupies residues 9-29 (LFLILGLLAGVAVAVGFALSA). Residues 30–151 (LQQNINLFYT…QAASGAEAKP (122 aa)) are Periplasmic-facing. Heme-binding residues include H124 and Y128.

The protein belongs to the CcmE/CycJ family.

It is found in the cell inner membrane. In terms of biological role, heme chaperone required for the biogenesis of c-type cytochromes. Transiently binds heme delivered by CcmC and transfers the heme to apo-cytochromes in a process facilitated by CcmF and CcmH. This Pseudomonas putida (strain W619) protein is Cytochrome c-type biogenesis protein CcmE.